A 238-amino-acid polypeptide reads, in one-letter code: Ditrans,polycis-undecaprenyl-diphosphate synthase ((2E,6E)-farnesyl-diphosphate specific) (238 aa).

The active site involves D14. Residue D14 coordinates Mg(2+). Residues 15-18 (GNGR), W19, R27, H31, and 59-61 (SSE) each bind substrate. N62 acts as the Proton acceptor in catalysis. Residues W63, R65, R182, and 188 to 190 (RIS) each bind substrate. E201 lines the Mg(2+) pocket.

It belongs to the UPP synthase family. As to quaternary structure, homodimer. It depends on Mg(2+) as a cofactor.

It carries out the reaction 8 isopentenyl diphosphate + (2E,6E)-farnesyl diphosphate = di-trans,octa-cis-undecaprenyl diphosphate + 8 diphosphate. In terms of biological role, catalyzes the sequential condensation of isopentenyl diphosphate (IPP) with (2E,6E)-farnesyl diphosphate (E,E-FPP) to yield (2Z,6Z,10Z,14Z,18Z,22Z,26Z,30Z,34E,38E)-undecaprenyl diphosphate (di-trans,octa-cis-UPP). UPP is the precursor of glycosyl carrier lipid in the biosynthesis of bacterial cell wall polysaccharide components such as peptidoglycan and lipopolysaccharide. The sequence is that of Ditrans,polycis-undecaprenyl-diphosphate synthase ((2E,6E)-farnesyl-diphosphate specific) from Legionella pneumophila (strain Paris).